The chain runs to 107 residues: L-rhamnose mutarotase (107 aa).

Tyrosine 21 serves as a coordination point for substrate. The active-site Proton donor is histidine 25. Residues tyrosine 44 and 79-80 (WW) contribute to the substrate site. The segment at 88-107 (ETNPDNSPKTNSLKEVFHLD) is disordered. Positions 90–100 (NPDNSPKTNSL) are enriched in polar residues.

It belongs to the rhamnose mutarotase family. As to quaternary structure, homodimer.

The protein resides in the cytoplasm. The enzyme catalyses alpha-L-rhamnose = beta-L-rhamnose. Its pathway is carbohydrate metabolism; L-rhamnose metabolism. Functionally, involved in the anomeric conversion of L-rhamnose. The sequence is that of L-rhamnose mutarotase from Flavobacterium johnsoniae (strain ATCC 17061 / DSM 2064 / JCM 8514 / BCRC 14874 / CCUG 350202 / NBRC 14942 / NCIMB 11054 / UW101) (Cytophaga johnsonae).